The following is a 190-amino-acid chain: NADH-quinone oxidoreductase subunit B (190 aa).

The [4Fe-4S] cluster site is built by C69, C70, C134, and C164.

Belongs to the complex I 20 kDa subunit family. In terms of assembly, NDH-1 is composed of 14 different subunits. Subunits NuoB, C, D, E, F, and G constitute the peripheral sector of the complex. It depends on [4Fe-4S] cluster as a cofactor.

The protein localises to the cell inner membrane. It catalyses the reaction a quinone + NADH + 5 H(+)(in) = a quinol + NAD(+) + 4 H(+)(out). Functionally, NDH-1 shuttles electrons from NADH, via FMN and iron-sulfur (Fe-S) centers, to quinones in the respiratory chain. Couples the redox reaction to proton translocation (for every two electrons transferred, four hydrogen ions are translocated across the cytoplasmic membrane), and thus conserves the redox energy in a proton gradient. This chain is NADH-quinone oxidoreductase subunit B, found in Hyphomonas neptunium (strain ATCC 15444).